Here is a 310-residue protein sequence, read N- to C-terminus: Ribosomal RNA small subunit methyltransferase H (310 aa).

S-adenosyl-L-methionine-binding positions include 33 to 35, D53, F79, D100, and Q107; that span reads AGH.

Belongs to the methyltransferase superfamily. RsmH family.

The protein resides in the cytoplasm. The catalysed reaction is cytidine(1402) in 16S rRNA + S-adenosyl-L-methionine = N(4)-methylcytidine(1402) in 16S rRNA + S-adenosyl-L-homocysteine + H(+). Functionally, specifically methylates the N4 position of cytidine in position 1402 (C1402) of 16S rRNA. In Clostridium beijerinckii (strain ATCC 51743 / NCIMB 8052) (Clostridium acetobutylicum), this protein is Ribosomal RNA small subunit methyltransferase H.